The sequence spans 319 residues: Sulfate adenylyltransferase subunit 2 (319 aa).

2 disordered regions span residues 1 to 22 and 296 to 319; these read MNPG…TRRP and RGAT…EGYF.

Belongs to the PAPS reductase family. CysD subfamily.

The catalysed reaction is sulfate + ATP + H(+) = adenosine 5'-phosphosulfate + diphosphate. The protein operates within antibiotic biosynthesis; mitomycin C biosynthesis. Functionally, with CysN forms the ATP sulfurylase (ATPS) that catalyzes the adenylation of sulfate producing adenosine 5'-phosphosulfate (APS) and diphosphate, the first enzymatic step in sulfur assimilation pathway. APS synthesis involves the formation of a high-energy phosphoric-sulfuric acid anhydride bond driven by GTP hydrolysis by CysN coupled to ATP hydrolysis by CysD. This Streptomyces lavendulae protein is Sulfate adenylyltransferase subunit 2 (mmcV).